A 389-amino-acid chain; its full sequence is Succinate--CoA ligase [ADP-forming] subunit beta (389 aa).

The ATP-grasp domain maps to 9–244; sequence KQLLAEYGIP…KTQEDETEVT (236 aa). ATP is bound by residues lysine 46, 53 to 55, glycine 102, and glutamate 107; that span reads GRG. The Mg(2+) site is built by asparagine 199 and aspartate 213. Substrate-binding positions include asparagine 264 and 321–323; that span reads GIV.

It belongs to the succinate/malate CoA ligase beta subunit family. As to quaternary structure, heterotetramer of two alpha and two beta subunits. Mg(2+) is required as a cofactor.

It catalyses the reaction succinate + ATP + CoA = succinyl-CoA + ADP + phosphate. It carries out the reaction GTP + succinate + CoA = succinyl-CoA + GDP + phosphate. It participates in carbohydrate metabolism; tricarboxylic acid cycle; succinate from succinyl-CoA (ligase route): step 1/1. Functionally, succinyl-CoA synthetase functions in the citric acid cycle (TCA), coupling the hydrolysis of succinyl-CoA to the synthesis of either ATP or GTP and thus represents the only step of substrate-level phosphorylation in the TCA. The beta subunit provides nucleotide specificity of the enzyme and binds the substrate succinate, while the binding sites for coenzyme A and phosphate are found in the alpha subunit. This chain is Succinate--CoA ligase [ADP-forming] subunit beta, found in Xanthomonas campestris pv. campestris (strain 8004).